We begin with the raw amino-acid sequence, 117 residues long: Venom protein TxLP11 (117 aa).

An N-terminal signal peptide occupies residues 1 to 22; it reads MNTKTLIVVFLVCLLVSEVVLA.

Contains 4 disulfide bonds. In terms of tissue distribution, expressed by the venom gland.

Its subcellular location is the secreted. This is Venom protein TxLP11 from Lychas mucronatus (Chinese swimming scorpion).